A 339-amino-acid polypeptide reads, in one-letter code: tRNA N6-adenosine threonylcarbamoyltransferase (339 aa).

2 residues coordinate Fe cation: H111 and H115. Residues 139 to 143 (LVSGG), D172, G185, D189, and N280 each bind substrate. Residue D308 participates in Fe cation binding.

It belongs to the KAE1 / TsaD family. It depends on Fe(2+) as a cofactor.

It localises to the cytoplasm. It carries out the reaction L-threonylcarbamoyladenylate + adenosine(37) in tRNA = N(6)-L-threonylcarbamoyladenosine(37) in tRNA + AMP + H(+). Its function is as follows. Required for the formation of a threonylcarbamoyl group on adenosine at position 37 (t(6)A37) in tRNAs that read codons beginning with adenine. Is involved in the transfer of the threonylcarbamoyl moiety of threonylcarbamoyl-AMP (TC-AMP) to the N6 group of A37, together with TsaE and TsaB. TsaD likely plays a direct catalytic role in this reaction. This is tRNA N6-adenosine threonylcarbamoyltransferase from Phocaeicola vulgatus (strain ATCC 8482 / DSM 1447 / JCM 5826 / CCUG 4940 / NBRC 14291 / NCTC 11154) (Bacteroides vulgatus).